A 237-amino-acid chain; its full sequence is 7-cyano-7-deazaguanine synthase (237 aa).

14 to 24 (FSGGQDSATCL) serves as a coordination point for ATP. Residues cysteine 202, cysteine 217, cysteine 220, and cysteine 223 each coordinate Zn(2+).

Belongs to the QueC family. Requires Zn(2+) as cofactor.

It catalyses the reaction 7-carboxy-7-deazaguanine + NH4(+) + ATP = 7-cyano-7-deazaguanine + ADP + phosphate + H2O + H(+). Its pathway is purine metabolism; 7-cyano-7-deazaguanine biosynthesis. Catalyzes the ATP-dependent conversion of 7-carboxy-7-deazaguanine (CDG) to 7-cyano-7-deazaguanine (preQ(0)). This Rhodopseudomonas palustris (strain ATCC BAA-98 / CGA009) protein is 7-cyano-7-deazaguanine synthase.